Consider the following 459-residue polypeptide: Pentatricopeptide repeat-containing protein At5g18390, mitochondrial (459 aa).

Residues 1–7 (MLLLRRY) constitute a mitochondrion transit peptide. PPR repeat units follow at residues 110-144 (TSME…SLDI), 145-175 (SGET…VPKT), 181-215 (TVDV…GLKP), 216-250 (DKRT…GFNP), 251-285 (PARG…GFVP), 286-320 (DIQT…GLCV), 321-355 (DIDT…GHKP), 356-390 (FPSL…AHPP), and 391-425 (NRPV…GLVP).

This sequence belongs to the PPR family. P subfamily.

The protein resides in the mitochondrion. The sequence is that of Pentatricopeptide repeat-containing protein At5g18390, mitochondrial from Arabidopsis thaliana (Mouse-ear cress).